We begin with the raw amino-acid sequence, 283 residues long: Protein/nucleic acid deglycase HchA (283 aa).

Positions 86, 91, and 123 each coordinate Zn(2+). The active-site Nucleophile is C185.

The protein belongs to the peptidase C56 family. HchA subfamily. As to quaternary structure, homodimer.

The protein localises to the cytoplasm. It carries out the reaction N(omega)-(1-hydroxy-2-oxopropyl)-L-arginyl-[protein] + H2O = lactate + L-arginyl-[protein] + H(+). It catalyses the reaction N(6)-(1-hydroxy-2-oxopropyl)-L-lysyl-[protein] + H2O = lactate + L-lysyl-[protein] + H(+). The enzyme catalyses S-(1-hydroxy-2-oxopropyl)-L-cysteinyl-[protein] + H2O = lactate + L-cysteinyl-[protein] + H(+). The catalysed reaction is N(omega)-(1-hydroxy-2-oxoethyl)-L-arginyl-[protein] + H2O = L-arginyl-[protein] + glycolate + H(+). It carries out the reaction N(6)-(1-hydroxy-2-oxoethyl)-L-lysyl-[protein] + H2O = glycolate + L-lysyl-[protein] + H(+). It catalyses the reaction S-(1-hydroxy-2-oxoethyl)-L-cysteinyl-[protein] + H2O = glycolate + L-cysteinyl-[protein] + H(+). The enzyme catalyses N(2)-(1-hydroxy-2-oxopropyl)-dGTP + H2O = lactate + dGTP + H(+). The catalysed reaction is N(2)-(1-hydroxy-2-oxopropyl)-GTP + H2O = lactate + GTP + H(+). It carries out the reaction N(2)-(1-hydroxy-2-oxopropyl)-GDP + H2O = lactate + GDP + H(+). It catalyses the reaction N(2)-(1-hydroxy-2-oxopropyl)-GMP + H2O = lactate + GMP + H(+). The enzyme catalyses N(2)-(1-hydroxy-2-oxoethyl)-dGTP + H2O = dGTP + glycolate + H(+). The catalysed reaction is N(2)-(1-hydroxy-2-oxoethyl)-GTP + H2O = glycolate + GTP + H(+). It carries out the reaction N(2)-(1-hydroxy-2-oxoethyl)-GDP + H2O = glycolate + GDP + H(+). It catalyses the reaction N(2)-(1-hydroxy-2-oxoethyl)-GMP + H2O = glycolate + GMP + H(+). The enzyme catalyses an N(2)-(1-hydroxy-2-oxopropyl)-guanosine in RNA + H2O = a guanosine in RNA + lactate + H(+). The catalysed reaction is an N(2)-(1-hydroxy-2-oxopropyl)-2'-deoxyguanosine in DNA + H2O = a 2'-deoxyguanosine in DNA + lactate + H(+). It carries out the reaction an N(2)-(1-hydroxy-2-oxoethyl)-guanosine in RNA + H2O = a guanosine in RNA + glycolate + H(+). It catalyses the reaction an N(2)-(1-hydroxy-2-oxoethyl)-2'-deoxyguanosine in DNA + H2O = a 2'-deoxyguanosine in DNA + glycolate + H(+). Protein and nucleotide deglycase that catalyzes the deglycation of the Maillard adducts formed between amino groups of proteins or nucleotides and reactive carbonyl groups of glyoxals. Thus, functions as a protein deglycase that repairs methylglyoxal- and glyoxal-glycated proteins, and releases repaired proteins and lactate or glycolate, respectively. Deglycates cysteine, arginine and lysine residues in proteins, and thus reactivates these proteins by reversing glycation by glyoxals. Acts on early glycation intermediates (hemithioacetals and aminocarbinols), preventing the formation of Schiff bases and advanced glycation endproducts (AGE). Also functions as a nucleotide deglycase able to repair glycated guanine in the free nucleotide pool (GTP, GDP, GMP, dGTP) and in DNA and RNA. Is thus involved in a major nucleotide repair system named guanine glycation repair (GG repair), dedicated to reversing methylglyoxal and glyoxal damage via nucleotide sanitization and direct nucleic acid repair. Plays an important role in protecting cells from carbonyl stress. This is Protein/nucleic acid deglycase HchA from Escherichia coli (strain K12 / MC4100 / BW2952).